A 691-amino-acid polypeptide reads, in one-letter code: WD repeat-containing protein 48 homolog (691 aa).

WD repeat units follow at residues Leu27–Tyr82, Arg88–Ser130, Leu133–Phe168, Gly180–Lys219, Gly222–Thr261, Ala264–Val303, Lys306–Asn347, and Ser399–Glu438.

Belongs to the WD repeat WDR48 family. As to quaternary structure, interacts with usp-46; the interaction increases the catalytic activity of usp-46 in the presence of wdr-20.

Its function is as follows. Together with wdr-20, binds to and stimulates the activity of the deubiquitinating enzyme usp-46, leading to deubiquitination and stabilization of the glr-1 glutamate receptor. This is WD repeat-containing protein 48 homolog (wdr-48) from Caenorhabditis briggsae.